The primary structure comprises 142 residues: Struthiocalcin-2 (142 aa).

Disulfide bonds link C6–C17, C34–C138, and C113–C130. The region spanning 13–139 (FDGRCYGFFP…CSDRKPFICE (127 aa)) is the C-type lectin domain. A phosphoserine mark is found at S62, S66, and S68.

It is found in the secreted. Its subcellular location is the extracellular space. The protein resides in the extracellular matrix. This is Struthiocalcin-2 from Struthio camelus (Common ostrich).